Here is a 300-residue protein sequence, read N- to C-terminus: tRNA dimethylallyltransferase 1 (300 aa).

10–17 serves as a coordination point for ATP; sequence GPTGVGKT. Residue 12–17 participates in substrate binding; sequence TGVGKT. The tract at residues 35 to 38 is interaction with substrate tRNA; sequence DSRQ.

Belongs to the IPP transferase family. Monomer. Mg(2+) serves as cofactor.

The catalysed reaction is adenosine(37) in tRNA + dimethylallyl diphosphate = N(6)-dimethylallyladenosine(37) in tRNA + diphosphate. Catalyzes the transfer of a dimethylallyl group onto the adenine at position 37 in tRNAs that read codons beginning with uridine, leading to the formation of N6-(dimethylallyl)adenosine (i(6)A). The sequence is that of tRNA dimethylallyltransferase 1 from Phocaeicola vulgatus (strain ATCC 8482 / DSM 1447 / JCM 5826 / CCUG 4940 / NBRC 14291 / NCTC 11154) (Bacteroides vulgatus).